The sequence spans 241 residues: Large ribosomal subunit protein uL2 (241 aa).

Residues 201 to 241 are disordered; sequence VDHPHGGGNRQHPGRPTTVSRHAPPGRKVGSIAAKRTGLKR.

Belongs to the universal ribosomal protein uL2 family. Part of the 50S ribosomal subunit. Forms a bridge to the 30S subunit in the 70S ribosome.

One of the primary rRNA binding proteins. Required for association of the 30S and 50S subunits to form the 70S ribosome, for tRNA binding and peptide bond formation. It has been suggested to have peptidyltransferase activity; this is somewhat controversial. Makes several contacts with the 16S rRNA in the 70S ribosome. This Methanobrevibacter smithii (strain ATCC 35061 / DSM 861 / OCM 144 / PS) protein is Large ribosomal subunit protein uL2.